Here is a 364-residue protein sequence, read N- to C-terminus: DNA polymerase IV (364 aa).

The UmuC domain maps to 6-194; that stretch reads VFHIDFDYFY…LKIRDIPGIG (189 aa). Residues Asp-10 and Asp-111 each contribute to the Mg(2+) site. Residue Glu-112 is part of the active site.

Belongs to the DNA polymerase type-Y family. Monomer. Mg(2+) is required as a cofactor.

Its subcellular location is the cytoplasm. The catalysed reaction is DNA(n) + a 2'-deoxyribonucleoside 5'-triphosphate = DNA(n+1) + diphosphate. Poorly processive, error-prone DNA polymerase involved in untargeted mutagenesis. Copies undamaged DNA at stalled replication forks, which arise in vivo from mismatched or misaligned primer ends. These misaligned primers can be extended by PolIV. Exhibits no 3'-5' exonuclease (proofreading) activity. May be involved in translesional synthesis. This chain is DNA polymerase IV, found in Nitrosopumilus maritimus (strain SCM1).